A 535-amino-acid chain; its full sequence is Beta-hexosaminidase 3 (535 aa).

Residues 1 to 24 (MRGSGAKIAGVLPLFMLFIAGTIS) form the signal peptide. N92 carries an N-linked (GlcNAc...) asparagine glycan. Cysteines 292 and 334 form a disulfide. The Proton donor role is filled by E329. 4 N-linked (GlcNAc...) asparagine glycosylation sites follow: N331, N405, N441, and N496. C506 and C532 are oxidised to a cystine.

This sequence belongs to the glycosyl hydrolase 20 family. Post-translationally, N-glycosylated. As to expression, expressed in roots, leaves, stems, flowers and siliques.

The protein resides in the cell membrane. It carries out the reaction Hydrolysis of terminal non-reducing N-acetyl-D-hexosamine residues in N-acetyl-beta-D-hexosaminides.. Its activity is regulated as follows. Slightly inhibited by N-acetylcastanospermine. Functionally, has a broad substrate specificity. Can use synthetic substrates such as pyridylaminated chitotriose, p-nitrophenyl-beta-N-acetylglucosaminide, p-nitrophenyl-2-acetamido-2-deoxy-beta-D-glucopyranoside (pNP-GlcNAc), p-nitrophenyl-2-acetamido-2-deoxy-beta-D-galactopyranoside (pNP-GalNAc), 4-methylumbelliferyl-2-acetamido-2-deoxy-beta-D-glucopyranoside (MU-GlcNAc), and 4-methylumbelliferyl-6-sulfo-2-acetamido-2-deoxy-beta-D-glucopyranoside (MU-GlcNAc-6SO(4)) as substrates. Removes terminal GlcNAc residues from alpha1,3- and alpha1,6-mannosyl branches of biantennary N-glycans without any strict branch preference. Required for the presence of paucimannosidic N-glycans in glycoproteins of roots and leaves. This chain is Beta-hexosaminidase 3 (HEXO3), found in Arabidopsis thaliana (Mouse-ear cress).